A 166-amino-acid chain; its full sequence is Large ribosomal subunit protein uL10 (166 aa).

The protein belongs to the universal ribosomal protein uL10 family. As to quaternary structure, part of the ribosomal stalk of the 50S ribosomal subunit. The N-terminus interacts with L11 and the large rRNA to form the base of the stalk. The C-terminus forms an elongated spine to which L12 dimers bind in a sequential fashion forming a multimeric L10(L12)X complex.

Its function is as follows. Forms part of the ribosomal stalk, playing a central role in the interaction of the ribosome with GTP-bound translation factors. The polypeptide is Large ribosomal subunit protein uL10 (Phytoplasma australiense).